Reading from the N-terminus, the 89-residue chain is Small ribosomal subunit protein uS15 (89 aa).

A disordered region spans residues 1-25; the sequence is MSLDTTEKQQLINTHQTHGTDTGSA. Over residues 8 to 25 the composition is skewed to polar residues; sequence KQQLINTHQTHGTDTGSA.

The protein belongs to the universal ribosomal protein uS15 family. As to quaternary structure, part of the 30S ribosomal subunit. Forms a bridge to the 50S subunit in the 70S ribosome, contacting the 23S rRNA.

Its function is as follows. One of the primary rRNA binding proteins, it binds directly to 16S rRNA where it helps nucleate assembly of the platform of the 30S subunit by binding and bridging several RNA helices of the 16S rRNA. Forms an intersubunit bridge (bridge B4) with the 23S rRNA of the 50S subunit in the ribosome. The protein is Small ribosomal subunit protein uS15 of Parasynechococcus marenigrum (strain WH8102).